The following is a 126-amino-acid chain: MAKLTQEEILEAIAGMTVLELSELVKAVEDKFGVKAAAPAVAVAAAAPAAAAAEEKTEFNVELTSAAADKKIAVIKVVREITGLGLKEAKDLVDGAPKVIKENVAKAEAEEMKKKVTEAGGVVTLK.

Belongs to the bacterial ribosomal protein bL12 family. Homodimer. Part of the ribosomal stalk of the 50S ribosomal subunit. Forms a multimeric L10(L12)X complex, where L10 forms an elongated spine to which 2 to 4 L12 dimers bind in a sequential fashion. Binds GTP-bound translation factors.

In terms of biological role, forms part of the ribosomal stalk which helps the ribosome interact with GTP-bound translation factors. Is thus essential for accurate translation. The chain is Large ribosomal subunit protein bL12 from Elusimicrobium minutum (strain Pei191).